The chain runs to 493 residues: Cytochrome P450 monooxygenase mfmF (493 aa).

A run of 2 helical transmembrane segments spans residues 3 to 23 (SLIPLTAIVLVLVAILHRLFF) and 301 to 321 (VLFAGADSTAVMLATILFHLV). Cysteine 440 is a binding site for heme.

Belongs to the cytochrome P450 family. Heme is required as a cofactor.

The protein localises to the membrane. It functions in the pathway secondary metabolite biosynthesis; terpenoid biosynthesis. Functionally, cytochrome P450 monooxygenase; part of the gene cluster that mediates the biosynthesis of the phthalide-terpenoid hybrid 11'-O-desmethylfendlerol. Within the pathway, mfmF catalyzes C-3 hydroxylation of 5-hydroxy-4-(hydroxymethyl)-7-methoxy-6-methylphthalide to yield cyclopolic acid. The biosynthesis of 11'-O-desmethylfendlerol begins with the NR-PKS mfmB that forms 3,5-dimethylorsellinic acid (DMOA), which is then transformed into the phthalide 5,7-dihydroxy-4-(hydroxymethyl)-6-methylphthalide by the cytochrome P450 monooxygenase mfmA and the hydrolase mfmC. Subsequently, the methyltransferase mfmE catalyzes 7-O-methylation to yield 5-hydroxy-4-(hydroxymethyl)-7-methoxy-6-methylphthalide, which undergoes C-3 hydroxylation by the cytochrome P450 monooxygenase mfmF. The resultant cyclopolic acid (2,5-dihydroxy-4-(hydroxymethyl)-7-methoxy-6-methylphthalide) is then farnesylated by the DMATS-type prenyltransferase mfmD to afford 5-O-farnesylcyclopolic acid. Finally, the Pyr4-family terpene cyclase mfmH cyclizes the farnesyl moiety of 5-O-farnesylcyclopolic acid into a drimane-like structure, thus completing the biosynthesis of 11'-O-desmethylfendlerol. The polypeptide is Cytochrome P450 monooxygenase mfmF (Annulohypoxylon moriforme (Filamentous fungus)).